Consider the following 386-residue polypeptide: uncharacterized protein (386 aa).

The tract at residues P355 to C386 is disordered. Residues H377 to C386 are compositionally biased toward basic residues.

This is an uncharacterized protein from Rickettsia prowazekii (strain Madrid E).